The primary structure comprises 218 residues: Autophagy-related protein 101 (218 aa).

The important for interaction with ATG13 stretch occupies residues 152–156; that stretch reads IINIV.

Belongs to the ATG101 family. In terms of assembly, interacts with ATG13. Associates with a complex composed of ATG13, ULK1 and RB1CC1; the association with this complex requires the presence of ATG13.

Its subcellular location is the cytoplasm. The protein localises to the preautophagosomal structure. Its function is as follows. Autophagy factor required for autophagosome formation. Stabilizes ATG13, protecting it from proteasomal degradation. This chain is Autophagy-related protein 101 (Atg101), found in Mus musculus (Mouse).